A 106-amino-acid chain; its full sequence is MANNEHVTPGEDDQQITLIDEKGNEELYQVLFTFDSEDYGKSYVLLYPASESDDQEVEIQAFSFTPDENGDASSGDLFPIEDDAEWDMVEEVLNTFLADDDSNLKD.

Belongs to the UPF0473 family.

The chain is UPF0473 protein LCABL_08490 from Lacticaseibacillus casei (strain BL23) (Lactobacillus casei).